The chain runs to 2615 residues: Collagen alpha-5(VI) chain (2615 aa).

The first 18 residues, 1 to 18 (MKILLIIFVLIIWTETLA), serve as a signal peptide directing secretion. Positions 19–1394 (DQSPGPGPVY…TCCCTFCKCP (1376 aa)) are nonhelical region. 7 consecutive VWFA domains span residues 30–209 (DVVF…IKDV), 236–413 (DLVF…LKKL), 442–612 (DIHF…KNEV), 628–797 (DIMF…ERKL), 814–987 (DVVF…FTLV), 1005–1178 (DVIF…KKRI), and 1194–1376 (DIVV…KLSQ). Asparagine 201 and asparagine 260 each carry an N-linked (GlcNAc...) asparagine glycan. Asparagine 835 is a glycosylation site (N-linked (GlcNAc...) asparagine). Collagen-like domains follow at residues 1395-1446 (GIPG…GCPG), 1434-1490 (GPQG…KGDP), 1464-1520 (GDDG…PGQN), 1524-1580 (KGQK…TLGA), 1579-1629 (GAEG…LGKK), and 1674-1729 (GDAG…MAGQ). Positions 1395–1728 (GIPGPHGTRG…GQRGIKGMAG (334 aa)) are triple-helical region. Positions 1404–1693 (GLQAMKGSQG…NPGIPGGPGP (290 aa)) are disordered. Positions 1430 to 1432 (RGD) match the Cell attachment site motif. Positions 1511–1522 (PGDPGNPGQNNN) are enriched in low complexity. Low complexity-rich tracts occupy residues 1601–1611 (SQGQKGPQGSP) and 1622–1641 (RPGL…LGPV). Positions 1729-2615 (QPVYSQCDLI…EDKEMEATDI (887 aa)) are nonhelical region. VWFA domains are found at residues 1758–1965 (ELVF…MDVV), 1963–2154 (DVVF…AKFL), and 2291–2487 (DVAF…VKPF). A glycan (N-linked (GlcNAc...) asparagine) is linked at asparagine 2509.

It belongs to the type VI collagen family. In terms of assembly, trimers composed of three different chains: alpha-1(VI), alpha-2(VI), and alpha-3(VI) or alpha-5(VI) or alpha-6(VI). Post-translationally, prolines at the third position of the tripeptide repeating unit (G-X-Y) are hydroxylated in some or all of the chains. Expressed in skin, followed by lung, small intestine, colon and testis. In skin, it is expressed in the epidermis with strongest staining in suprabasal viable layers. In ATOD patients, it is absent in the most differentiated upper spinous and granular layers (at protein level).

It is found in the secreted. The protein localises to the extracellular space. It localises to the extracellular matrix. Collagen VI acts as a cell-binding protein. This chain is Collagen alpha-5(VI) chain (COL6A5), found in Homo sapiens (Human).